The primary structure comprises 388 residues: Glutamine transporter 2 (388 aa).

11 helical membrane-spanning segments follow: residues 5-27 (LFGS…IPMV), 31-53 (FGLF…AALL), 86-106 (LFYL…ADLI), 121-141 (FAQV…TQII), 147-167 (LLFF…IPGM), 186-206 (TSTI…LVAY), 218-238 (MVIL…YAVV), 268-288 (IILS…VAMA), 302-322 (IVTY…AADQ), 326-346 (VLGY…LAMV), and 368-388 (GGKL…ISQI).

It belongs to the amino acid/polyamine transporter 2 family.

It localises to the cell inner membrane. Functionally, seems to be involved in glutamine transport. Complements an E.coli glnP deletion mutant. The sequence is that of Glutamine transporter 2 from Aliivibrio fischeri (strain ATCC 700601 / ES114) (Vibrio fischeri).